We begin with the raw amino-acid sequence, 129 residues long: Snaclec coagulation factor IX-binding protein subunit A (129 aa).

The C-type lectin domain occupies 1–129 (DCPSGWSSYE…GQQNPFVCEA (129 aa)). Cystine bridges form between cysteine 2–cysteine 13, cysteine 30–cysteine 127, and cysteine 102–cysteine 119. Ca(2+) contacts are provided by serine 41, glutamate 43, and glutamate 47. A Ca(2+)-binding site is contributed by glutamate 128.

This sequence belongs to the snaclec family. In terms of assembly, heterodimer of subunits A and B; disulfide-linked. Expressed by the venom gland.

It is found in the secreted. Its function is as follows. Anticoagulant protein which binds to the gamma-carboxyglutamic acid-domain regions of factor IX (F9) (but not factor X) in the presence of calcium with a 1 to 1 stoichiometry. The polypeptide is Snaclec coagulation factor IX-binding protein subunit A (Protobothrops flavoviridis (Habu)).